The following is a 314-amino-acid chain: NAC domain-containing protein 10 (314 aa).

Positions 18–39 (VSNTDHPSVQLKDQSQSCVTSR) are enriched in polar residues. 2 disordered regions span residues 18 to 48 (VSNTDHPSVQLKDQSQSCVTSRPDSKISAET) and 150 to 182 (YTTGTRKRRKVSTDEEGHETRWHKTGKTRPVLS). The NAC domain occupies 77–236 (LPAGVKFDPS…EPVLSKVFYQ (160 aa)). Positions 160 to 171 (VSTDEEGHETRW) are enriched in basic and acidic residues. Residues 187–242 (TGFKKILVLYTNYGRQKKPEKTNWVMHQYHLGSSEDEKDGEPVLSKVFYQTQPRQC) mediate DNA binding.

Expressed in protoxylem and elongating interfascicular fiber cells of elongating internodes, developing metaxylem cells and interfascicular fibers of non-elongating internodes and developing secondary xylem of roots.

It localises to the nucleus. Functionally, transcriptional activator that plays a regulatory role in the development of secondary cell wall fibers. Is a direct target of SND1. The protein is NAC domain-containing protein 10 of Arabidopsis thaliana (Mouse-ear cress).